We begin with the raw amino-acid sequence, 333 residues long: Probable G-protein coupled receptor 33 (333 aa).

Residues 1 to 30 (MDLINSTDYLINASTLVRNSTQFLAPASKM) are Extracellular-facing. Residues Asn5, Asn12, and Asn19 are each glycosylated (N-linked (GlcNAc...) asparagine). A helical transmembrane segment spans residues 31-53 (IIALSLYISSIIGTITNGLYLWV). Topologically, residues 54–64 (LRFKMKQTVNT) are cytoplasmic. A helical transmembrane segment spans residues 65–86 (LLFFHLILSYFISTMILPFMAT). At 87–103 (SQLQDNHWNFGTALCKV) the chain is on the extracellular side. An intrachain disulfide couples Cys101 to Cys179. A helical transmembrane segment spans residues 104-124 (FNGTLSLGMFTSVFFLSAIGL). Topologically, residues 125–143 (DRYLLTLHPVWSQQHRTPR) are cytoplasmic. The helical transmembrane segment at 144–165 (WASSIVLGVWISAAALSIPYLI) threads the bilayer. Residues 166–209 (FRQTHHDRKGKVTCQNNYAVSTNWESKEMQALRQWIHVACFISR) are Extracellular-facing. A helical transmembrane segment spans residues 210 to 230 (FLLGFLLPFFIIIFCYERVAS). Residues 231 to 246 (KVKERSLFKSSKPFKV) lie on the Cytoplasmic side of the membrane. A helical transmembrane segment spans residues 247 to 268 (MMTAIISFFVCWMPYHIHQGLL). At 269-283 (LTTNQSLLLELTLIL) the chain is on the extracellular side. Residue Asn272 is glycosylated (N-linked (GlcNAc...) asparagine). The helical transmembrane segment at 284–303 (TVLTTSFNTIFSPTLYLFVG) threads the bilayer. Residues 304 to 333 (ENFKKVFKKSILALFESTFSEDSSVERTQT) lie on the Cytoplasmic side of the membrane.

The protein belongs to the G-protein coupled receptor 1 family.

Its subcellular location is the cell membrane. Its function is as follows. Orphan receptor; could be a chemoattractant receptor. The chain is Probable G-protein coupled receptor 33 (GPR33) from Pan troglodytes (Chimpanzee).